A 425-amino-acid polypeptide reads, in one-letter code: Cyanogenic beta-glucosidase (425 aa).

Positions leucine 1 to alanine 11 are cleaved as a signal peptide. A beta-D-glucoside-binding positions include glutamine 44, histidine 148, and asparagine 193–glutamate 194. The active-site Proton donor is glutamate 194. Cysteine 213 and cysteine 221 form a disulfide bridge. Residue asparagine 220 is glycosylated (N-linked (GlcNAc...) asparagine). 2 residues coordinate a beta-D-glucoside: tyrosine 337 and glutamate 408. Glutamate 408 acts as the Nucleophile in catalysis. N-linked (GlcNAc...) asparagine glycosylation is present at asparagine 412.

The protein belongs to the glycosyl hydrolase 1 family. Homodimer. Leaves.

The catalysed reaction is Hydrolysis of terminal, non-reducing beta-D-glucosyl residues with release of beta-D-glucose.. Functionally, hydrolyzes cyanoglucosides, contributing to the release of hydrocyanic acid, which functions as a defense mechanism against small predators, when the leaf tissue is damaged. This chain is Cyanogenic beta-glucosidase (LI), found in Trifolium repens (Creeping white clover).